Here is a 247-residue protein sequence, read N- to C-terminus: Small ribosomal subunit protein uS2 (247 aa).

The protein belongs to the universal ribosomal protein uS2 family.

In Cupriavidus taiwanensis (strain DSM 17343 / BCRC 17206 / CCUG 44338 / CIP 107171 / LMG 19424 / R1) (Ralstonia taiwanensis (strain LMG 19424)), this protein is Small ribosomal subunit protein uS2.